Consider the following 169-residue polypeptide: Peptide methionine sulfoxide reductase MsrA (169 aa).

Cysteine 10 is a catalytic residue.

It belongs to the MsrA Met sulfoxide reductase family.

The catalysed reaction is L-methionyl-[protein] + [thioredoxin]-disulfide + H2O = L-methionyl-(S)-S-oxide-[protein] + [thioredoxin]-dithiol. The enzyme catalyses [thioredoxin]-disulfide + L-methionine + H2O = L-methionine (S)-S-oxide + [thioredoxin]-dithiol. Its function is as follows. Has an important function as a repair enzyme for proteins that have been inactivated by oxidation. Catalyzes the reversible oxidation-reduction of methionine sulfoxide in proteins to methionine. The sequence is that of Peptide methionine sulfoxide reductase MsrA from Streptococcus pyogenes serotype M3 (strain ATCC BAA-595 / MGAS315).